A 204-amino-acid chain; its full sequence is Inactive ribonuclease-like protein 9 (204 aa).

A signal peptide spans 1–26; sequence MMRTLITTHPLLLLLLLQQLLQPVQF. Disulfide bonds link cysteine 97–cysteine 152, cysteine 115–cysteine 167, and cysteine 122–cysteine 129. 2 N-linked (GlcNAc...) asparagine glycosylation sites follow: asparagine 130 and asparagine 142.

This sequence belongs to the pancreatic ribonuclease family.

Its subcellular location is the secreted. Does not exhibit any ribonuclease activity. The polypeptide is Inactive ribonuclease-like protein 9 (RNASE9) (Papio anubis (Olive baboon)).